Reading from the N-terminus, the 796-residue chain is MDELAGGGGGGQGMAAPPRPQQGPGGNLSLPPGANGAPGGGGPPAAEAAGPPAGPELSRPQQYTIPGILHYIQHEWARFEMERAHWEVERAELQARIAFLQGERKGQENLKKDLVRRIKMLEYALKQERAKYHKLKYGTELNQGDLKMPTFESEETKDVEAPPAPQNSQLTWKQGRQLLRQYLQEVGYTDTILDVRSQRVRSLLGLSNSEPNGSVEAKNLEQILNGGESPKQKGQEIKRPPGDVLETFNFLENADDSDEEENDMIEGIPEGKDKLRIHKHKIGNEGLAADLTDDPDTEEALKEFDFLVTAEDGEGAGEARSSGDGTEWDKDDLSPTAEVWDVDQGLISKLKEQYKKERKGKKGVKRVNRTNLCDMITDLGDDELPHIPSGIINQSRSASTRMADHEGARAEEAEPITFPSGGGKSFIMGSDDVLLSVLGLGDLADLTVTNDADYSYDLPANKDAFRKTWNPKYTLRSHFDGVRALAFHPVEPVLVTASEDHTLKLWNLQKTVPAKKSASLDVEPIYTFRAHIGPVLSLAISSNGEQCFSGGIDATIQWWNMPSPNVDPYDTYESNVLAGTLVAHTDAVWGLAYSGIKNQLLSCSADGTIRLWNPQEKLPCVCTYNGDKEHGIPTSVDFIGCDPAHMVTSFNTGSAVIYDLETSQSLVMLSSQVDSGLQSSNHINRVVSHPTLPVTITAHEDRHIKFFDNKTGKMIHSMVAHLDAVTSLAVDPNGIYLMSGSHDCSIRLWNLDSKTCVQEITAHRKKLDESIYDVAFHPSKAYIASAGADALAKVFV.

M1 is subject to N-acetylmethionine. Positions 1–13 (MDELAGGGGGGQG) are enriched in gly residues. The tract at residues 1–60 (MDELAGGGGGGQGMAAPPRPQQGPGGNLSLPPGANGAPGGGGPPAAEAAGPPAGPELSRP) is disordered. Residues 71 to 79 (YIQHEWARF) form a caveolin-binding region. Residues 77-136 (ARFEMERAHWEVERAELQARIAFLQGERKGQENLKKDLVRRIKMLEYALKQERAKYHKLK) adopt a coiled-coil conformation. Position 150 is a phosphothreonine (T150). The interval 166-183 (QNSQLTWKQGRQLLRQYL) is calmodulin-binding. 5 positions are modified to phosphoserine: S202, S214, S229, S257, and S334. 2 disordered regions span residues 252–271 (ENAD…IPEG) and 311–335 (EDGE…DLSP). Residues 253–264 (NADDSDEEENDM) show a composition bias toward acidic residues. 6 WD repeats span residues 477-516 (SHFD…PAKK), 530-569 (AHIG…VDPY), 583-622 (AHTD…PCVC), 678-717 (QSSN…MIHS), 720-759 (AHLD…CVQE), and 766-795 (KLDE…AKVF).

This sequence belongs to the WD repeat striatin family. In terms of assembly, tetramerizes. Part of the core of STRIPAK complexes composed of PP2A catalytic and scaffolding subunits, the striatins (PP2A regulatory subunits), the striatin-associated proteins MOB4, STRIP1 and STRIP2, PDCD10 and members of the STE20 kinases, such as STK24 and STK26. The STRIPAK complex can be extended by adapter proteins such as SLMAP:SIKE1 or CTTNBP2NL. Interacts with CDC42BPB. Mainly expressed in the brain and muscles but is also detected at low levels in various tissues such as kidney, spleen and lung.

The protein localises to the cytoplasm. The protein resides in the membrane. Functionally, calmodulin-binding scaffolding protein which is the center of the striatin-interacting phosphatase and kinase (STRIPAK) complexes. STRIPAK complexes have critical roles in protein (de)phosphorylation and are regulators of multiple signaling pathways including Hippo, MAPK, nuclear receptor and cytoskeleton remodeling. Different types of STRIPAK complexes are involved in a variety of biological processes such as cell growth, differentiation, apoptosis, metabolism and immune regulation. The protein is Striatin-3 (Strn3) of Mus musculus (Mouse).